A 599-amino-acid polypeptide reads, in one-letter code: Kelch-like protein 24a (599 aa).

Residues 65–132 (TDVIISVQGR…VYTGRACITT (68 aa)) form the BTB domain. Positions 167–269 (CLGIQRFADA…HPNYFVQTVE (103 aa)) constitute a BACK domain. Kelch repeat units follow at residues 313–362 (VIVV…ALRN), 364–406 (IILS…VLLG), 407–453 (KVYA…SCAG), 455–501 (LFVI…SLNH), 503–543 (IYVC…VCNG), and 545–591 (IYIL…TVHR).

As to quaternary structure, forms homodimers. Component of the BCR(KLHL24) E3 ubiquitin ligase complex.

It is found in the perikaryon. The protein resides in the cell projection. The protein localises to the axon. It localises to the cytoplasm. Its subcellular location is the cell junction. It is found in the desmosome. The protein resides in the adherens junction. Functionally, necessary to maintain the balance between intermediate filament stability and degradation, a process that is essential for skin integrity. Reduces kainate receptor-mediated currents in brain neurons, most probably by modulating channel properties. It is required for proper heart development. This chain is Kelch-like protein 24a, found in Danio rerio (Zebrafish).